The following is a 199-amino-acid chain: Recombination protein RecR (199 aa).

The C4-type zinc-finger motif lies at 58 to 73 (CKICFNITDKEVCDIC). A Toprim domain is found at 81-176 (STICVVSHPM…KVTRIAHGIP (96 aa)).

Belongs to the RecR family.

In terms of biological role, may play a role in DNA repair. It seems to be involved in an RecBC-independent recombinational process of DNA repair. It may act with RecF and RecO. This Caldanaerobacter subterraneus subsp. tengcongensis (strain DSM 15242 / JCM 11007 / NBRC 100824 / MB4) (Thermoanaerobacter tengcongensis) protein is Recombination protein RecR.